The primary structure comprises 290 residues: Ribosomal RNA small subunit methyltransferase A (290 aa).

S-adenosyl-L-methionine is bound by residues asparagine 27, leucine 29, glycine 54, glutamate 75, aspartate 100, and asparagine 125.

Belongs to the class I-like SAM-binding methyltransferase superfamily. rRNA adenine N(6)-methyltransferase family. RsmA subfamily.

The protein localises to the cytoplasm. It catalyses the reaction adenosine(1518)/adenosine(1519) in 16S rRNA + 4 S-adenosyl-L-methionine = N(6)-dimethyladenosine(1518)/N(6)-dimethyladenosine(1519) in 16S rRNA + 4 S-adenosyl-L-homocysteine + 4 H(+). Its function is as follows. Specifically dimethylates two adjacent adenosines (A1518 and A1519) in the loop of a conserved hairpin near the 3'-end of 16S rRNA in the 30S particle. May play a critical role in biogenesis of 30S subunits. In Streptococcus uberis (strain ATCC BAA-854 / 0140J), this protein is Ribosomal RNA small subunit methyltransferase A.